We begin with the raw amino-acid sequence, 319 residues long: Probable enoyl-CoA hydratase alpha subunit (319 aa).

A DUF35 region spans residues 199 to 298 (FEAAKQRRLV…EIGMPVVLDW (100 aa)).

Belongs to the thioester dehydratase family. As to quaternary structure, heterodimer composed of ChsH1 and ChsH2. Two heterodimers combine to form a heterotetramer. The complex interacts with Ltp2 via the DUF35 C-terminal region of ChsH2.

Functionally, probably involved in bile acid degradation. The polypeptide is Probable enoyl-CoA hydratase alpha subunit (Thermomonospora curvata (strain ATCC 19995 / DSM 43183 / JCM 3096 / KCTC 9072 / NBRC 15933 / NCIMB 10081 / Henssen B9)).